We begin with the raw amino-acid sequence, 675 residues long: UvrABC system protein B (675 aa).

Residues 32–417 form the Helicase ATP-binding domain; it reads EGLSDGLAYQ…EHAGQVVEQV (386 aa). 45–52 serves as a coordination point for ATP; that stretch reads GVTGSGKT. The short motif at 98–121 is the Beta-hairpin element; that stretch reads YYDYYQPEAYVPSRDLFIEKDSAI. The region spanning 436–602 is the Helicase C-terminal domain; the sequence is QVDDLMSEIN…QIKKQVKDII (167 aa). In terms of domain architecture, UVR spans 634 to 669; that stretch reads IKEIAKLEKAMQQAARDLQFEEAAVLRDRISNIKEN.

The protein belongs to the UvrB family. As to quaternary structure, forms a heterotetramer with UvrA during the search for lesions. Interacts with UvrC in an incision complex.

Its subcellular location is the cytoplasm. Its function is as follows. The UvrABC repair system catalyzes the recognition and processing of DNA lesions. A damage recognition complex composed of 2 UvrA and 2 UvrB subunits scans DNA for abnormalities. Upon binding of the UvrA(2)B(2) complex to a putative damaged site, the DNA wraps around one UvrB monomer. DNA wrap is dependent on ATP binding by UvrB and probably causes local melting of the DNA helix, facilitating insertion of UvrB beta-hairpin between the DNA strands. Then UvrB probes one DNA strand for the presence of a lesion. If a lesion is found the UvrA subunits dissociate and the UvrB-DNA preincision complex is formed. This complex is subsequently bound by UvrC and the second UvrB is released. If no lesion is found, the DNA wraps around the other UvrB subunit that will check the other stand for damage. This chain is UvrABC system protein B, found in Neisseria gonorrhoeae (strain ATCC 700825 / FA 1090).